A 272-amino-acid polypeptide reads, in one-letter code: 5'-AMP-activated protein kinase subunit beta-2 (272 aa).

Positions 1–52 (MGNTTSDRVSGERHGAKAARSEGAGGHAPGKEHKIMVGSTDDPSVFSLPDSK) are disordered. Ser39 carries the phosphoserine modification. Phosphothreonine is present on Thr40. Ser69 carries the post-translational modification Phosphoserine; by ULK1. 2 positions are modified to phosphoserine: Ser95 and Ser108. Thr148 carries the phosphothreonine modification. Phosphoserine occurs at positions 158, 170, 174, and 184.

It belongs to the 5'-AMP-activated protein kinase beta subunit family. In terms of assembly, AMPK is a heterotrimer of an alpha catalytic subunit (PRKAA1 or PRKAA2), a beta (PRKAB1 or PRKAB2) and a gamma non-catalytic subunits (PRKAG1, PRKAG2 or PRKAG3). In terms of processing, phosphorylated when associated with the catalytic subunit (PRKAA1 or PRKAA2). Phosphorylated by ULK1 and ULK2; leading to negatively regulate AMPK activity and suggesting the existence of a regulatory feedback loop between ULK1, ULK2 and AMPK.

In terms of biological role, non-catalytic subunit of AMP-activated protein kinase (AMPK), an energy sensor protein kinase that plays a key role in regulating cellular energy metabolism. In response to reduction of intracellular ATP levels, AMPK activates energy-producing pathways and inhibits energy-consuming processes: inhibits protein, carbohydrate and lipid biosynthesis, as well as cell growth and proliferation. AMPK acts via direct phosphorylation of metabolic enzymes, and by longer-term effects via phosphorylation of transcription regulators. Also acts as a regulator of cellular polarity by remodeling the actin cytoskeleton; probably by indirectly activating myosin. Beta non-catalytic subunit acts as a scaffold on which the AMPK complex assembles, via its C-terminus that bridges alpha (PRKAA1 or PRKAA2) and gamma subunits (PRKAG1, PRKAG2 or PRKAG3). The protein is 5'-AMP-activated protein kinase subunit beta-2 (PRKAB2) of Homo sapiens (Human).